Reading from the N-terminus, the 413-residue chain is Putative zinc finger protein B0310.2 (413 aa).

2 disordered regions span residues 130–151 (PIFS…KRSL) and 259–290 (VESD…TGPM). Polar residues predominate over residues 270 to 281 (PSPSTGDITENE). 2 consecutive C2H2-type zinc fingers follow at residues 306-330 (FICM…MFIH) and 336-358 (HTCP…KKTH).

Its subcellular location is the nucleus. This is Putative zinc finger protein B0310.2 from Caenorhabditis elegans.